Consider the following 153-residue polypeptide: SsrA-binding protein (153 aa).

Belongs to the SmpB family.

Its subcellular location is the cytoplasm. Its function is as follows. Required for rescue of stalled ribosomes mediated by trans-translation. Binds to transfer-messenger RNA (tmRNA), required for stable association of tmRNA with ribosomes. tmRNA and SmpB together mimic tRNA shape, replacing the anticodon stem-loop with SmpB. tmRNA is encoded by the ssrA gene; the 2 termini fold to resemble tRNA(Ala) and it encodes a 'tag peptide', a short internal open reading frame. During trans-translation Ala-aminoacylated tmRNA acts like a tRNA, entering the A-site of stalled ribosomes, displacing the stalled mRNA. The ribosome then switches to translate the ORF on the tmRNA; the nascent peptide is terminated with the 'tag peptide' encoded by the tmRNA and targeted for degradation. The ribosome is freed to recommence translation, which seems to be the essential function of trans-translation. This chain is SsrA-binding protein, found in Paramagnetospirillum magneticum (strain ATCC 700264 / AMB-1) (Magnetospirillum magneticum).